Here is a 207-residue protein sequence, read N- to C-terminus: LPS-assembly lipoprotein LptE (207 aa).

An N-terminal signal peptide occupies residues 1–19; that stretch reads MRHRILTLLLGLAVLVTAG. Residue Cys20 is the site of N-palmitoyl cysteine attachment. Residue Cys20 is the site of S-diacylglycerol cysteine attachment. A disordered region spans residues 168–207; it reads KNTQKNGDKPVSDANAAQGSTPTAVNETTLGEPAVSTSAK. Positions 182 to 207 are enriched in polar residues; it reads NAAQGSTPTAVNETTLGEPAVSTSAK.

The protein belongs to the LptE lipoprotein family. In terms of assembly, component of the lipopolysaccharide transport and assembly complex. Interacts with LptD.

Its subcellular location is the cell outer membrane. Its function is as follows. Together with LptD, is involved in the assembly of lipopolysaccharide (LPS) at the surface of the outer membrane. Required for the proper assembly of LptD. Binds LPS and may serve as the LPS recognition site at the outer membrane. This chain is LPS-assembly lipoprotein LptE, found in Yersinia pseudotuberculosis serotype O:1b (strain IP 31758).